The chain runs to 163 residues: Ribosome maturation factor RimM (163 aa).

The 69-residue stretch at 94–162 (ADEYYYIDLI…DHLVIAADFI (69 aa)) folds into the PRC barrel domain.

Belongs to the RimM family. As to quaternary structure, binds ribosomal protein uS19.

The protein localises to the cytoplasm. In terms of biological role, an accessory protein needed during the final step in the assembly of 30S ribosomal subunit, possibly for assembly of the head region. Essential for efficient processing of 16S rRNA. May be needed both before and after RbfA during the maturation of 16S rRNA. It has affinity for free ribosomal 30S subunits but not for 70S ribosomes. This is Ribosome maturation factor RimM from Zymomonas mobilis subsp. mobilis (strain ATCC 31821 / ZM4 / CP4).